We begin with the raw amino-acid sequence, 67 residues long: DNA-directed RNA polymerase subunit omega (67 aa).

The protein belongs to the RNA polymerase subunit omega family. The RNAP catalytic core consists of 2 alpha, 1 beta, 1 beta' and 1 omega subunit. When a sigma factor is associated with the core the holoenzyme is formed, which can initiate transcription.

It catalyses the reaction RNA(n) + a ribonucleoside 5'-triphosphate = RNA(n+1) + diphosphate. Functionally, promotes RNA polymerase assembly. Latches the N- and C-terminal regions of the beta' subunit thereby facilitating its interaction with the beta and alpha subunits. This chain is DNA-directed RNA polymerase subunit omega, found in Polynucleobacter asymbioticus (strain DSM 18221 / CIP 109841 / QLW-P1DMWA-1) (Polynucleobacter necessarius subsp. asymbioticus).